The following is a 1041-amino-acid chain: Desmoglein-4 (1041 aa).

Positions 1 to 23 are cleaved as a signal peptide; it reads MDWLLFRNICLLILFMVVLGVNS. The propeptide occupies 24-49; that stretch reads EFIVEVKELDIENGTTTWQTVRRQKR. Cadherin domains lie at 50-157, 158-269, 270-385, and 389-497; these read EWIK…PPVF, TQNV…FPIL, EKTS…GPTF, and SMTF…CPVI. The Extracellular segment spans residues 50–634; sequence EWIKFAAACR…RQSNVGLGPA (585 aa). The N-linked (GlcNAc...) asparagine glycan is linked to Asn-110. Residue Asn-545 is glycosylated (N-linked (GlcNAc...) asparagine). Residues 635–655 form a helical membrane-spanning segment; sequence GIGMIILGLLLLLLSPLLLLM. Residues 656 to 1041 lie on the Cytoplasmic side of the membrane; that stretch reads CCCKRRQPEG…RYSNMHYSRQ (386 aa). 2 Desmoglein repeat repeats span residues 884–910 and 911–941; these read TLSE…IVTE and TYTT…ETVM. The tract at residues 1014–1041 is disordered; sequence ISQTTGSTSPMTSQHRVTRYSNMHYSRQ.

Interacts with JUP. Strongly expressed in the skin; during the anagen stage of hair follicles in the matrix, precortex and inner rooth sheath.

It localises to the cell membrane. It is found in the cell junction. The protein resides in the desmosome. Its function is as follows. A component of desmosome cell-cell junctions which are required for positive regulation of cellular adhesion. Coordinates the transition from proliferation to differentiation in hair follicle keratinocytes. Plays a role in moderating lymphocyte migration to inflamed skin and maintaining homeostasis of the epidermal inflammatory response. The chain is Desmoglein-4 (Dsg4) from Mus musculus (Mouse).